Reading from the N-terminus, the 510-residue chain is GTPase Der (510 aa).

EngA-type G domains follow at residues leucine 3–alanine 167 and isoleucine 230–threonine 405. GTP is bound by residues glycine 9 to serine 16, aspartate 56 to phenylalanine 60, asparagine 119 to glutamate 122, glycine 236 to serine 243, aspartate 283 to leucine 287, and serine 348 to aspartate 351. Positions alanine 406 to lysine 490 constitute a KH-like domain.

It belongs to the TRAFAC class TrmE-Era-EngA-EngB-Septin-like GTPase superfamily. EngA (Der) GTPase family. Associates with the 50S ribosomal subunit.

Its function is as follows. GTPase that plays an essential role in the late steps of ribosome biogenesis. This Hyphomonas neptunium (strain ATCC 15444) protein is GTPase Der.